We begin with the raw amino-acid sequence, 776 residues long: Probable E3 ubiquitin-protein ligase HECTD2 (776 aa).

Residues M1–A46 form a disordered region. Low complexity predominate over residues V7–A20. S9 is modified (phosphoserine). The span at P21–L34 shows a compositional bias: basic and acidic residues. An HECT domain is found at K437–E776. C744 serves as the catalytic Glycyl thioester intermediate.

It carries out the reaction S-ubiquitinyl-[E2 ubiquitin-conjugating enzyme]-L-cysteine + [acceptor protein]-L-lysine = [E2 ubiquitin-conjugating enzyme]-L-cysteine + N(6)-ubiquitinyl-[acceptor protein]-L-lysine.. The protein operates within protein modification; protein ubiquitination. In terms of biological role, E3 ubiquitin-protein ligase which accepts ubiquitin from an E2 ubiquitin-conjugating enzyme in the form of a thioester and then directly transfers the ubiquitin to targeted substrates. The chain is Probable E3 ubiquitin-protein ligase HECTD2 (HECTD2) from Pongo abelii (Sumatran orangutan).